Consider the following 386-residue polypeptide: Tryptophan--tRNA ligase (386 aa).

A 'HIGH' region motif is present at residues 82–90; the sequence is PSGPMHIGH. A 'KMSKS' region motif is present at residues 253–257; the sequence is KMSAS.

The protein belongs to the class-I aminoacyl-tRNA synthetase family.

The protein resides in the cytoplasm. The enzyme catalyses tRNA(Trp) + L-tryptophan + ATP = L-tryptophyl-tRNA(Trp) + AMP + diphosphate + H(+). The chain is Tryptophan--tRNA ligase from Pyrococcus horikoshii (strain ATCC 700860 / DSM 12428 / JCM 9974 / NBRC 100139 / OT-3).